The sequence spans 203 residues: Small ribosomal subunit protein uS2 (203 aa).

Belongs to the universal ribosomal protein uS2 family.

In Methanopyrus kandleri (strain AV19 / DSM 6324 / JCM 9639 / NBRC 100938), this protein is Small ribosomal subunit protein uS2.